Here is a 359-residue protein sequence, read N- to C-terminus: uncharacterized protein (359 aa).

Disordered stretches follow at residues 90–117, 132–161, and 235–359; these read QESP…PSRK, IKKE…GMTS, and TSME…THRR. The segment covering 151–161 has biased composition (polar residues); that stretch reads TPGSCSSGMTS. Residues 245-259 are compositionally biased toward low complexity; the sequence is KPPTVKSPPTVKLPP. The segment covering 286-299 has biased composition (basic and acidic residues); that stretch reads EENKEVPKEAEHKP.

This is an uncharacterized protein from Homo sapiens (Human).